The sequence spans 55 residues: uncharacterized protein (55 aa).

This is an uncharacterized protein from Acidithiobacillus ferrooxidans (Thiobacillus ferrooxidans).